Consider the following 194-residue polypeptide: 7-methyl-GTP pyrophosphatase (194 aa).

Residue aspartate 69 is the Proton acceptor of the active site.

Belongs to the Maf family. YceF subfamily. A divalent metal cation is required as a cofactor.

The protein resides in the cytoplasm. The enzyme catalyses N(7)-methyl-GTP + H2O = N(7)-methyl-GMP + diphosphate + H(+). Nucleoside triphosphate pyrophosphatase that hydrolyzes 7-methyl-GTP (m(7)GTP). May have a dual role in cell division arrest and in preventing the incorporation of modified nucleotides into cellular nucleic acids. This chain is 7-methyl-GTP pyrophosphatase, found in Sodalis glossinidius (strain morsitans).